The primary structure comprises 305 residues: Aspartate carbamoyltransferase catalytic subunit (305 aa).

2 residues coordinate carbamoyl phosphate: arginine 53 and threonine 54. An L-aspartate-binding site is contributed by lysine 82. Residues arginine 103, histidine 131, and glutamine 134 each contribute to the carbamoyl phosphate site. L-aspartate is bound by residues arginine 164 and arginine 226. Carbamoyl phosphate-binding residues include leucine 265 and proline 266.

Belongs to the aspartate/ornithine carbamoyltransferase superfamily. ATCase family. Heterooligomer of catalytic and regulatory chains.

It carries out the reaction carbamoyl phosphate + L-aspartate = N-carbamoyl-L-aspartate + phosphate + H(+). Its pathway is pyrimidine metabolism; UMP biosynthesis via de novo pathway; (S)-dihydroorotate from bicarbonate: step 2/3. Its function is as follows. Catalyzes the condensation of carbamoyl phosphate and aspartate to form carbamoyl aspartate and inorganic phosphate, the committed step in the de novo pyrimidine nucleotide biosynthesis pathway. The polypeptide is Aspartate carbamoyltransferase catalytic subunit (Ignicoccus hospitalis (strain KIN4/I / DSM 18386 / JCM 14125)).